Consider the following 73-residue polypeptide: Crustacean hyperglycemic hormone (73 aa).

Intrachain disulfides connect cysteine 7–cysteine 43, cysteine 23–cysteine 39, and cysteine 26–cysteine 52. Serine 73 carries the post-translational modification Serine amide.

In terms of tissue distribution, produced by the medulla terminalis X-organ in the eyestalks and transported to the sinus gland where they are stored and released. Found also in the brain; in the neuroendocrine structures of the protocerebrum.

It is found in the secreted. Its function is as follows. Hormone found in the sinus gland of isopods and decapods which controls the blood sugar level. Has a secretagogue action over the amylase released from the midgut gland. May act as a stress hormone and may be involved in the control of molting and reproduction. The protein is Crustacean hyperglycemic hormone of Armadillidium vulgare (Pillbug).